The primary structure comprises 301 residues: Ribonuclease HIII (301 aa).

Residues 84-301 (ASAIGSDEVG…TEKAARIAKK (218 aa)) form the RNase H type-2 domain. Residues Asp-90, Glu-91, and Asp-195 each contribute to the a divalent metal cation site.

The protein belongs to the RNase HII family. RnhC subfamily. Mn(2+) serves as cofactor. It depends on Mg(2+) as a cofactor.

It localises to the cytoplasm. The enzyme catalyses Endonucleolytic cleavage to 5'-phosphomonoester.. Endonuclease that specifically degrades the RNA of RNA-DNA hybrids. The sequence is that of Ribonuclease HIII from Geobacillus sp. (strain WCH70).